The following is a 115-amino-acid chain: Large ribosomal subunit protein bL20 (115 aa).

The protein belongs to the bacterial ribosomal protein bL20 family.

Binds directly to 23S ribosomal RNA and is necessary for the in vitro assembly process of the 50S ribosomal subunit. It is not involved in the protein synthesizing functions of that subunit. This is Large ribosomal subunit protein bL20 from Bdellovibrio bacteriovorus (strain ATCC 15356 / DSM 50701 / NCIMB 9529 / HD100).